Reading from the N-terminus, the 329-residue chain is Glycerol-3-phosphate dehydrogenase [NAD(P)+] (329 aa).

NADPH contacts are provided by Trp-15, His-35, and Lys-107. Sn-glycerol 3-phosphate is bound by residues Lys-107, Gly-135, and Ser-137. Ala-139 is an NADPH binding site. Sn-glycerol 3-phosphate is bound by residues Lys-190, Asp-243, Ser-253, Arg-254, and Asn-255. Catalysis depends on Lys-190, which acts as the Proton acceptor. Residue Arg-254 coordinates NADPH. Positions 276 and 278 each coordinate NADPH.

It belongs to the NAD-dependent glycerol-3-phosphate dehydrogenase family.

Its subcellular location is the cytoplasm. It catalyses the reaction sn-glycerol 3-phosphate + NAD(+) = dihydroxyacetone phosphate + NADH + H(+). The catalysed reaction is sn-glycerol 3-phosphate + NADP(+) = dihydroxyacetone phosphate + NADPH + H(+). The protein operates within membrane lipid metabolism; glycerophospholipid metabolism. Functionally, catalyzes the reduction of the glycolytic intermediate dihydroxyacetone phosphate (DHAP) to sn-glycerol 3-phosphate (G3P), the key precursor for phospholipid synthesis. This is Glycerol-3-phosphate dehydrogenase [NAD(P)+] from Rhodopseudomonas palustris (strain BisB5).